Reading from the N-terminus, the 1152-residue chain is P3N-PIPO polyprotein (1152 aa).

One can recognise a Peptidase S30 domain in the interval 292 to 437 (VMNQQTLMAF…HSITHRMVQY (146 aa)). Active-site for P1 proteinase activity residues include H345, D354, and S388. The short motif at 489–492 (KITC) is the Involved in interaction with stylet and aphid transmission element. Residues 747 to 749 (PTK) carry the Involved in virions binding and aphid transmission motif. In terms of domain architecture, Peptidase C6 spans 773–895 (MFVTKDGYCY…ESEMQHYRVG (123 aa)). Residues C781 and H854 each act as for helper component proteinase activity in the active site.

Belongs to the potyviridae P3N-PIPO polyprotein family. Interacts (via PIPO domain) with host PCaP1 protein; this interaction may help to anchor the movement complex to the plasma membrane from which the complex could move to the plasmodesmata. Post-translationally, potyviral RNA is expressed as two polyproteins which undergo post-translational proteolytic processing. Genome polyprotein is processed by NIa-pro, P1 and HC-pro proteinases resulting in the production of at least ten individual proteins. P3N-PIPO is cleaved by P1 and HC-pro proteinases resulting in the production of three individual proteins. The P1 proteinase and the HC-pro cleave only their respective C-termini autocatalytically.

It is found in the host cell junction. Its subcellular location is the host plasmodesma. It catalyses the reaction Hydrolyzes a Gly-|-Gly bond at its own C-terminus, commonly in the sequence -Tyr-Xaa-Val-Gly-|-Gly, in the processing of the potyviral polyprotein.. Functionally, required for aphid transmission and also has proteolytic activity. Only cleaves a Gly-Gly dipeptide at its own C-terminus. Interacts with virions and aphid stylets. Acts as a suppressor of RNA-mediated gene silencing, also known as post-transcriptional gene silencing (PTGS), a mechanism of plant viral defense that limits the accumulation of viral RNAs. May have RNA-binding activity. Its function is as follows. Allows efficient cell to cell propagation, by bypassing the host cell wall barrier. Transports viral genome to neighboring plant cells directly through plasmosdesmata, without any budding. This chain is P3N-PIPO polyprotein, found in Lettuce mosaic virus (strain 0 / isolate French) (LMV).